Consider the following 756-residue polypeptide: Ent-kaurene synthase, chloroplastic (756 aa).

Residues Asp-507 and Asp-511 each coordinate Mg(2+). Positions 507-511 (DDFFD) match the DDXXD motif motif. The helical transmembrane segment at 606–622 (YVSFALGPIVLPCLYLV) threads the bilayer. Mg(2+) is bound by residues Asn-651, Thr-655, and Glu-659.

It belongs to the terpene synthase family. The cofactor is Mg(2+). In terms of tissue distribution, present in both leaves and flowers.

The protein resides in the plastid. It is found in the chloroplast membrane. It carries out the reaction ent-copalyl diphosphate = ent-kaur-16-ene + diphosphate. Its pathway is plant hormone biosynthesis; gibberellin biosynthesis. Involved in the biosynthesis of labdane-type diterpenoid including marrubiin and other labdane-related furanoid diterpenoids with potential applications as anti-diabetics, analgesics or vasorelaxants. Terpene synthase that produces ent-kaurene from ent-copalyl diphosphate (ent-CPP). This is Ent-kaurene synthase, chloroplastic from Marrubium vulgare (White horehound).